Reading from the N-terminus, the 475-residue chain is Cytosolic non-specific dipeptidase (475 aa).

At Ala-2 the chain carries N-acetylalanine. Position 9 is an N6-acetyllysine (Lys-9). Ser-58 is subject to Phosphoserine. His-99 serves as a coordination point for Mn(2+). Residue Asp-101 is part of the active site. Asp-132 contacts Mn(2+). The Proton acceptor role is filled by Glu-166. Residues 166–167 (EE), Asp-195, and His-228 each bind substrate. Positions 167 and 195 each coordinate Mn(2+). Ser-299 carries the phosphoserine modification. Thr-330, Arg-343, Ser-417, and His-445 together coordinate substrate. His-445 contacts Mn(2+).

Belongs to the peptidase M20A family. Homodimer. Mn(2+) serves as cofactor. Ubiquitously expressed with higher levels in kidney and liver (at protein level). Expressed in peripheral blood leukocytes. Expressed in gastric mucosa and down-regulated in gastric cancer mucosal tissues (at protein level). As to expression, broadly expressed in fetal tissues. Expressed in adult liver and placenta.

It localises to the cytoplasm. It catalyses the reaction Hydrolysis of dipeptides, preferentially hydrophobic dipeptides including prolyl amino acids.. The enzyme catalyses L-threonyl-L-threonine + H2O = 2 L-threonine. It carries out the reaction L-threonyl-L-serine + H2O = L-threonine + L-serine. The catalysed reaction is L-seryl-L-threonine + H2O = L-threonine + L-serine. It catalyses the reaction L-cysteinylglycine + H2O = L-cysteine + glycine. The enzyme catalyses L-alanyl-L-cysteine + H2O = L-cysteine + L-alanine. It carries out the reaction (S)-lactate + L-phenylalanine = N-[(S)-lactoyl]-L-phenylalanine + H2O. Inhibited by p-hydroxymercurybenzoate. The inhibitory concentration 50% (IC(50)) is 13 uM. Inhibited by bestatin. The inhibitory concentration 50% (IC(50)) is 7 nM at pH 9.5. In terms of biological role, catalyzes the peptide bond hydrolysis in dipeptides, displaying a non-redundant activity toward threonyl dipeptides. Mediates threonyl dipeptide catabolism in a tissue-specific way. Has high dipeptidase activity toward cysteinylglycine, an intermediate metabolite in glutathione metabolism. Metabolizes N-lactoyl-amino acids, both through hydrolysis to form lactic acid and amino acids, as well as through their formation by reverse proteolysis. Plays a role in the regulation of cell cycle arrest and apoptosis. The protein is Cytosolic non-specific dipeptidase of Homo sapiens (Human).